Here is a 221-residue protein sequence, read N- to C-terminus: CDC5 pindle pole body anchor protein 1 (221 aa).

Positions K142–E221 are disordered. 3 positions are modified to phosphoserine: S158, S170, and S175. The short motif at P165–S170 is the CDC5-binding element. Over residues L166 to Q188 the composition is skewed to polar residues. A CLB3-docking motif is present at residues P189–F195. A CDC14-binding motif is present at residues P200 to L202.

As to quaternary structure, interacts with CDC5 and CDC14. In terms of processing, phosphorylated by CLB3-CDK1 in metaphase which is required for correct localization at the nuclear envelop and the spindle pole body, and dephosphorylated by CDC14 in early anaphase.

The protein localises to the nucleus membrane. It localises to the cytoplasm. It is found in the cytoskeleton. The protein resides in the microtubule organizing center. Its subcellular location is the spindle pole body. Its function is as follows. Specialized component of the nuclear membrane that may be involved in the connection of the spindle pole body (SPB) to the nuclear envelope. Recruits CDC5 to spindle pole bodies in metaphase. This chain is CDC5 pindle pole body anchor protein 1, found in Saccharomyces cerevisiae (strain ATCC 204508 / S288c) (Baker's yeast).